The sequence spans 90 residues: Small ribosomal subunit protein bS16 (90 aa).

This sequence belongs to the bacterial ribosomal protein bS16 family.

In Streptococcus pneumoniae serotype 19F (strain G54), this protein is Small ribosomal subunit protein bS16.